We begin with the raw amino-acid sequence, 313 residues long: Porphobilinogen deaminase (313 aa).

Residue C242 is modified to S-(dipyrrolylmethanemethyl)cysteine.

This sequence belongs to the HMBS family. In terms of assembly, monomer. It depends on dipyrromethane as a cofactor.

It carries out the reaction 4 porphobilinogen + H2O = hydroxymethylbilane + 4 NH4(+). It participates in porphyrin-containing compound metabolism; protoporphyrin-IX biosynthesis; coproporphyrinogen-III from 5-aminolevulinate: step 2/4. Functionally, tetrapolymerization of the monopyrrole PBG into the hydroxymethylbilane pre-uroporphyrinogen in several discrete steps. This is Porphobilinogen deaminase from Escherichia coli O7:K1 (strain IAI39 / ExPEC).